We begin with the raw amino-acid sequence, 459 residues long: Hemopexin (459 aa).

Positions Met-1–Ala-23 are cleaved as a signal peptide. 3 disulfide bridges follow: Cys-52–Cys-232, Cys-150–Cys-155, and Cys-189–Cys-201. Hemopexin repeat units lie at residues Gly-55–Ala-95, Pro-96–Ile-140, Pro-141–Ala-185, and Val-186–Cys-232. A heme-binding site is contributed by His-81. His-151 is a binding site for heme. N-linked (GlcNAc...) asparagine glycosylation is present at Asn-188. Residue Asn-218 is glycosylated (N-linked (GlcNAc...) asparagine). His-237 is a heme binding site. N-linked (GlcNAc...) asparagine glycosylation is present at Asn-241. Disulfide bonds link Cys-250-Cys-453, Cys-359-Cys-401, and Cys-411-Cys-428. Hemopexin repeat units follow at residues Pro-252–Gly-297, Pro-298–Pro-345, Leu-350–Leu-389, and His-393–Ala-444. His-286 lines the heme pocket.

Belongs to the hemopexin family.

The protein resides in the secreted. Binds heme and transports it to the liver for breakdown and iron recovery, after which the free hemopexin returns to the circulation. In Bos taurus (Bovine), this protein is Hemopexin (HPX).